Here is a 258-residue protein sequence, read N- to C-terminus: Na(+)-translocating NADH-quinone reductase subunit C (258 aa).

Residues 14-34 traverse the membrane as a helical segment; that stretch reads LIVVLAVSLICSVIVAGAVVG. Ser-226 is subject to FMN phosphoryl serine.

The protein belongs to the NqrC family. As to quaternary structure, composed of six subunits; NqrA, NqrB, NqrC, NqrD, NqrE and NqrF. The cofactor is FMN.

It localises to the cell inner membrane. It carries out the reaction a ubiquinone + n Na(+)(in) + NADH + H(+) = a ubiquinol + n Na(+)(out) + NAD(+). In terms of biological role, NQR complex catalyzes the reduction of ubiquinone-1 to ubiquinol by two successive reactions, coupled with the transport of Na(+) ions from the cytoplasm to the periplasm. NqrA to NqrE are probably involved in the second step, the conversion of ubisemiquinone to ubiquinol. The polypeptide is Na(+)-translocating NADH-quinone reductase subunit C (Neisseria meningitidis serogroup B (strain ATCC BAA-335 / MC58)).